A 1063-amino-acid chain; its full sequence is Endo-1,4-beta-xylanase 2 (1063 aa).

CBM-cenC domains lie at 5–146, 183–313, 348–482, and 517–662; these read NIVM…GPAP, NIIK…LEGP, NHIF…IEGP, and NIVS…QGPS. In terms of domain architecture, GH10 spans 711-1006; the sequence is SGATVKIRQT…NEAGKRFLEI (296 aa). The Proton donor role is filled by glutamate 840. The active-site Nucleophile is glutamate 941.

Belongs to the glycosyl hydrolase 10 (cellulase F) family.

It carries out the reaction Endohydrolysis of (1-&gt;4)-beta-D-xylosidic linkages in xylans.. Its pathway is glycan degradation; xylan degradation. Functionally, binds to and hydrolyzes insoluble and soluble xylan substrates. This is Endo-1,4-beta-xylanase 2 from Arabidopsis thaliana (Mouse-ear cress).